Consider the following 1158-residue polypeptide: ATP-dependent helicase/deoxyribonuclease subunit B (1158 aa).

One can recognise a UvrD-like helicase ATP-binding domain in the interval 1–275 (MTLHAYLGRA…QYFNQLYRFN (275 aa)). 8-15 (GRAGTGKS) is an ATP binding site. Positions 269–583 (NQLYRFNNQD…SIGTMDLAKV (315 aa)) constitute a UvrD-like helicase C-terminal domain. The [4Fe-4S] cluster site is built by Cys784, Cys1112, Cys1115, and Cys1121.

Belongs to the helicase family. AddB/RexB type 1 subfamily. Heterodimer of AddA and AddB. The cofactor is Mg(2+). Requires [4Fe-4S] cluster as cofactor.

Functionally, the heterodimer acts as both an ATP-dependent DNA helicase and an ATP-dependent, dual-direction single-stranded exonuclease. Recognizes the chi site generating a DNA molecule suitable for the initiation of homologous recombination. The AddB subunit has 5' -&gt; 3' nuclease activity but not helicase activity. The chain is ATP-dependent helicase/deoxyribonuclease subunit B from Staphylococcus aureus (strain MW2).